The chain runs to 241 residues: Small ribosomal subunit protein uS2 (241 aa).

This sequence belongs to the universal ribosomal protein uS2 family.

In Citrobacter koseri (strain ATCC BAA-895 / CDC 4225-83 / SGSC4696), this protein is Small ribosomal subunit protein uS2.